Here is a 408-residue protein sequence, read N- to C-terminus: Succinylornithine transaminase (408 aa).

Lys252 bears the N6-(pyridoxal phosphate)lysine mark.

This sequence belongs to the class-III pyridoxal-phosphate-dependent aminotransferase family. AstC subfamily. Pyridoxal 5'-phosphate is required as a cofactor.

The enzyme catalyses N(2)-succinyl-L-ornithine + 2-oxoglutarate = N-succinyl-L-glutamate 5-semialdehyde + L-glutamate. It participates in amino-acid degradation; L-arginine degradation via AST pathway; L-glutamate and succinate from L-arginine: step 3/5. Its function is as follows. Catalyzes the transamination of N(2)-succinylornithine and alpha-ketoglutarate into N(2)-succinylglutamate semialdehyde and glutamate. Can also act as an acetylornithine aminotransferase. This chain is Succinylornithine transaminase, found in Salmonella paratyphi B (strain ATCC BAA-1250 / SPB7).